The primary structure comprises 70 residues: Probable tautomerase RSp0893 (70 aa).

Catalysis depends on Pro-2, which acts as the Proton acceptor; via imino nitrogen.

This sequence belongs to the 4-oxalocrotonate tautomerase family.

The polypeptide is Probable tautomerase RSp0893 (Ralstonia nicotianae (strain ATCC BAA-1114 / GMI1000) (Ralstonia solanacearum)).